Here is a 686-residue protein sequence, read N- to C-terminus: CAI-1 autoinducer sensor kinase/phosphatase CqsS (686 aa).

The next 6 helical transmembrane spans lie at 21 to 41 (LVGW…EYWF), 47 to 64 (NLGL…LVFR), 77 to 97 (GYFL…MMLM), 100 to 120 (WSTI…LLVH), 124 to 144 (VMAL…YGLT), and 152 to 172 (IEWQ…LCFF). One can recognise a Histidine kinase domain in the interval 191 to 416 (GIAHEMRNPL…EFVLSFPRYD (226 aa)). Position 194 is a phosphohistidine; by autocatalysis (His-194). Residues 569-686 (RILVVDDNQS…VLLNKVAAWV (118 aa)) form the Response regulatory domain. Asp-618 is subject to 4-aspartylphosphate.

Its subcellular location is the cell membrane. The enzyme catalyses ATP + protein L-histidine = ADP + protein N-phospho-L-histidine.. In terms of biological role, senses the quorum-sensing autoinducer CAI-1 ((S)-3-hydroxytridecan-4-one) which probably functions as an intragenus signal. The sensory signal is then relayed to LuxU and LuxO. The chain is CAI-1 autoinducer sensor kinase/phosphatase CqsS (cqsS) from Vibrio cholerae serotype O1 (strain ATCC 39315 / El Tor Inaba N16961).